A 180-amino-acid chain; its full sequence is Large ribosomal subunit protein uL6 (180 aa).

Belongs to the universal ribosomal protein uL6 family. In terms of assembly, part of the 50S ribosomal subunit.

In terms of biological role, this protein binds to the 23S rRNA, and is important in its secondary structure. It is located near the subunit interface in the base of the L7/L12 stalk, and near the tRNA binding site of the peptidyltransferase center. This Clostridium beijerinckii (strain ATCC 51743 / NCIMB 8052) (Clostridium acetobutylicum) protein is Large ribosomal subunit protein uL6.